We begin with the raw amino-acid sequence, 209 residues long: Small ribosomal subunit protein uS4 (209 aa).

In terms of domain architecture, S4 RNA-binding spans 98–164; sequence RRLDNVVYRL…LPIKNAIELN (67 aa).

This sequence belongs to the universal ribosomal protein uS4 family. In terms of assembly, part of the 30S ribosomal subunit. Contacts protein S5. The interaction surface between S4 and S5 is involved in control of translational fidelity.

One of the primary rRNA binding proteins, it binds directly to 16S rRNA where it nucleates assembly of the body of the 30S subunit. Its function is as follows. With S5 and S12 plays an important role in translational accuracy. The chain is Small ribosomal subunit protein uS4 from Thermosipho melanesiensis (strain DSM 12029 / CIP 104789 / BI429).